Reading from the N-terminus, the 184-residue chain is dTTP/UTP pyrophosphatase (184 aa).

Catalysis depends on Asp67, which acts as the Proton acceptor.

The protein belongs to the Maf family. YhdE subfamily. A divalent metal cation serves as cofactor.

The protein localises to the cytoplasm. It catalyses the reaction dTTP + H2O = dTMP + diphosphate + H(+). It carries out the reaction UTP + H2O = UMP + diphosphate + H(+). In terms of biological role, nucleoside triphosphate pyrophosphatase that hydrolyzes dTTP and UTP. May have a dual role in cell division arrest and in preventing the incorporation of modified nucleotides into cellular nucleic acids. This Elusimicrobium minutum (strain Pei191) protein is dTTP/UTP pyrophosphatase.